The sequence spans 738 residues: Interleukin-12 receptor subunit beta-1 (738 aa).

Residues 1–19 (MDMMGLAGTSKHITFLLLC) form the signal peptide. Residues 20-565 (QLGASGPGDG…QRFSFEVQIS (546 aa)) are Extracellular-facing. Fibronectin type-III domains are found at residues 47–152 (GPRN…TPPL), 152–258 (LGHI…PEVL), 259–359 (PQAK…LPAQ), 360–465 (ELTE…GNAS), and 469–565 (TPRH…VQIS). A glycan (N-linked (GlcNAc...) asparagine) is linked at Asn-50. A disulfide bond links Cys-53 and Cys-63. N-linked (GlcNAc...) asparagine glycans are attached at residues Asn-73, Asn-86, Asn-130, Asn-144, Asn-169, and Asn-188. Residues 244–248 (WSDWS) carry the WSXWS motif motif. N-linked (GlcNAc...) asparagine glycosylation is found at Asn-330, Asn-368, Asn-374, Asn-401, Asn-463, and Asn-477. The chain crosses the membrane as a helical span at residues 566–591 (RLSIIFASLGSFASVLLVGSLGYIGL). The Cytoplasmic segment spans residues 592 to 738 (NRAAWHLCPP…PGPPTLGQEA (147 aa)). The Box 1 motif motif lies at 598–606 (LCPPLPTPC).

Belongs to the type I cytokine receptor family. Type 2 subfamily. In terms of assembly, dimer or oligomer; disulfide-linked. Interacts with IL12RB2 to form the high affinity IL12 receptor. Heterodimer with IL23R; in presence of IL23. The heterodimer forms the IL23 receptor.

Its subcellular location is the membrane. Its function is as follows. Functions as an interleukin receptor which binds interleukin-12 with low affinity and is involved in IL12 transduction. Associated with IL12RB2 it forms a functional, high affinity receptor for IL12. Also associates with IL23R to form the interleukin-23 receptor which functions in IL23 signal transduction probably through activation of the Jak-Stat signaling cascade. In Mus musculus (Mouse), this protein is Interleukin-12 receptor subunit beta-1 (Il12rb1).